The primary structure comprises 61 residues: Prophage outer membrane lipoprotein RzoR (61 aa).

A signal peptide spans 1–19 (MRKLKMMLCVMMLPLVVVG). Residue cysteine 20 is the site of N-palmitoyl cysteine attachment. The S-diacylglycerol cysteine moiety is linked to residue cysteine 20.

It belongs to the lambdalikevirus o-spanin family. As to quaternary structure, homodimer; disulfide-linked. Interacts (via C-terminus) with RZ (via C-terminus). Part of the spanin complex which spans the entire periplasmic space. The spanin complex is composed of spanin, inner membrane subunit and spanin, outer membrane subunit.

The protein localises to the cell outer membrane. Functionally, component of the spanin complex that disrupts the outer membrane and causes cell lysis during virus exit. The spanin complex conducts the final step in cell lysis by disrupting the outer membrane after holin and endolysin action have permeabilized the inner membrane and degraded the host peptidoglycans. This is Prophage outer membrane lipoprotein RzoR (rzoR) from Escherichia coli (strain K12).